The primary structure comprises 177 residues: Large ribosomal subunit protein uL10 (177 aa).

The protein belongs to the universal ribosomal protein uL10 family. As to quaternary structure, part of the ribosomal stalk of the 50S ribosomal subunit. The N-terminus interacts with L11 and the large rRNA to form the base of the stalk. The C-terminus forms an elongated spine to which L12 dimers bind in a sequential fashion forming a multimeric L10(L12)X complex.

Its function is as follows. Forms part of the ribosomal stalk, playing a central role in the interaction of the ribosome with GTP-bound translation factors. This is Large ribosomal subunit protein uL10 from Thermoanaerobacter sp. (strain X514).